We begin with the raw amino-acid sequence, 92 residues long: RNA-binding protein Hfq (92 aa).

One can recognise a Sm domain in the interval 11-71 (DRFLNHLRVN…ISTIIPSSYV (61 aa)).

This sequence belongs to the Hfq family. Homohexamer.

In terms of biological role, RNA chaperone that binds small regulatory RNA (sRNAs) and mRNAs to facilitate mRNA translational regulation in response to envelope stress, environmental stress and changes in metabolite concentrations. Also binds with high specificity to tRNAs. The protein is RNA-binding protein Hfq of Thermotoga maritima (strain ATCC 43589 / DSM 3109 / JCM 10099 / NBRC 100826 / MSB8).